We begin with the raw amino-acid sequence, 502 residues long: Type II methyltransferase M.HincII (502 aa).

This sequence belongs to the N(4)/N(6)-methyltransferase family.

The enzyme catalyses a 2'-deoxyadenosine in DNA + S-adenosyl-L-methionine = an N(6)-methyl-2'-deoxyadenosine in DNA + S-adenosyl-L-homocysteine + H(+). In terms of biological role, a gamma subtype methylase that recognizes the double-stranded sequence 5'-GTYRAC-3', methylates A-5 on both strands, and protects the DNA from cleavage by the HincII endonuclease. The sequence is that of Type II methyltransferase M.HincII from Haemophilus influenzae.